The following is a 209-amino-acid chain: DNA transformation protein TfoX1 (209 aa).

The protein belongs to the Sxy/TfoX family.

Its function is as follows. Required for DNA transformation jointly with TfoY (tfoX2). The sequence is that of DNA transformation protein TfoX1 from Aliivibrio fischeri (strain ATCC 700601 / ES114) (Vibrio fischeri).